The following is a 714-amino-acid chain: Neutral ceramidase A (714 aa).

The signal sequence occupies residues M1–A23. N218 and N246 each carry an N-linked (GlcNAc...) asparagine glycan. The active-site Nucleophile is the S293. Residues N353, N373, N416, N571, N610, and N700 are each glycosylated (N-linked (GlcNAc...) asparagine).

It belongs to the neutral ceramidase family.

Its subcellular location is the secreted. The catalysed reaction is an N-acylsphing-4-enine + H2O = sphing-4-enine + a fatty acid. Functionally, hydrolyzes the sphingolipid ceramide into sphingosine and free fatty acid at an optimal pH of 3.0. Has no activity toward glycosphingolipids, such as GalCer and Galbeta1-3GalNAcbeta1-4(NeuAcalpha2-3)Galbeta1-4Glcbeta1-1'Cer or sphingomyelin. The protein is Neutral ceramidase A (dcd2A) of Dictyostelium discoideum (Social amoeba).